Reading from the N-terminus, the 285-residue chain is Inositol oxygenase (285 aa).

Arg-29 lines the substrate pocket. A Phosphoserine modification is found at Ser-33. Position 85–87 (85–87) interacts with substrate; sequence DES. Residues His-98, His-123, and Asp-124 each coordinate Fe cation. Residues Lys-127 and 141–142 each bind substrate; that span reads GD. Positions 194, 220, and 253 each coordinate Fe cation. 220-221 serves as a coordination point for substrate; it reads HS.

Belongs to the myo-inositol oxygenase family. Fe cation serves as cofactor. Kidney specific.

It is found in the cytoplasm. The catalysed reaction is myo-inositol + O2 = D-glucuronate + H2O + H(+). Its pathway is polyol metabolism; myo-inositol degradation into D-glucuronate; D-glucuronate from myo-inositol: step 1/1. The polypeptide is Inositol oxygenase (MIOX) (Homo sapiens (Human)).